The following is a 152-amino-acid chain: MSEKYVVTWDMLQMQARKLAHRLLPADQWTGIIAVSRGGLVPAALLARELGIRHVDTVCISSYDHDNQREMKVLKRAEGDGEGFIVIDDLVDTGGTAKAIREMYPKAHFVTIFAKPAGRPLVDDYVVDIPQDTWIEQPWDMAVTFVPPIGGR.

5-phospho-alpha-D-ribose 1-diphosphate is bound by residues 37-38, Arg69, and 88-96; these read RG and DDLVDTGGT. GMP is bound at residue Arg69. Asp89 is a Mg(2+) binding site. The guanine site is built by Asp92 and Ile135. Residues Asp92 and Ile135 each contribute to the xanthine site. GMP-binding positions include 92-96 and 134-135; these read DTGGT and WI.

The protein belongs to the purine/pyrimidine phosphoribosyltransferase family. XGPT subfamily. Homotetramer. It depends on Mg(2+) as a cofactor.

It is found in the cell inner membrane. The catalysed reaction is GMP + diphosphate = guanine + 5-phospho-alpha-D-ribose 1-diphosphate. The enzyme catalyses XMP + diphosphate = xanthine + 5-phospho-alpha-D-ribose 1-diphosphate. It catalyses the reaction IMP + diphosphate = hypoxanthine + 5-phospho-alpha-D-ribose 1-diphosphate. It functions in the pathway purine metabolism; GMP biosynthesis via salvage pathway; GMP from guanine: step 1/1. Its pathway is purine metabolism; XMP biosynthesis via salvage pathway; XMP from xanthine: step 1/1. In terms of biological role, purine salvage pathway enzyme that catalyzes the transfer of the ribosyl-5-phosphate group from 5-phospho-alpha-D-ribose 1-diphosphate (PRPP) to the N9 position of the 6-oxopurines guanine and xanthine to form the corresponding ribonucleotides GMP (guanosine 5'-monophosphate) and XMP (xanthosine 5'-monophosphate), with the release of PPi. To a lesser extent, also acts on hypoxanthine. The protein is Xanthine-guanine phosphoribosyltransferase of Serratia proteamaculans (strain 568).